A 111-amino-acid chain; its full sequence is UPF0145 protein BRADO6695 (111 aa).

This sequence belongs to the UPF0145 family.

This is UPF0145 protein BRADO6695 from Bradyrhizobium sp. (strain ORS 278).